Reading from the N-terminus, the 220-residue chain is MNSAKLIDHTLLKPESTRTQIDQIIDEAKAYHFKSVCVNPTHVKYAAERLADSEVLVCTVIGFPLGASTTATKAFETEDAIQNGADEIDMVINIGALKDGRFDDVQQDIEAVVKAAKGHTVKVIIETVLLDHDEIVKASELTKVAGADFVKTSTGFAGGGATAEDVKLMKDTVGADVEVKASGGVRNLEDFNKMVEAGATRIGASAGVQIMQGLEADSDY.

The Proton donor/acceptor role is filled by D89. Catalysis depends on K151, which acts as the Schiff-base intermediate with acetaldehyde. The Proton donor/acceptor role is filled by K180.

Belongs to the DeoC/FbaB aldolase family. DeoC type 1 subfamily.

The protein localises to the cytoplasm. It catalyses the reaction 2-deoxy-D-ribose 5-phosphate = D-glyceraldehyde 3-phosphate + acetaldehyde. It functions in the pathway carbohydrate degradation; 2-deoxy-D-ribose 1-phosphate degradation; D-glyceraldehyde 3-phosphate and acetaldehyde from 2-deoxy-alpha-D-ribose 1-phosphate: step 2/2. Catalyzes a reversible aldol reaction between acetaldehyde and D-glyceraldehyde 3-phosphate to generate 2-deoxy-D-ribose 5-phosphate. This is Deoxyribose-phosphate aldolase 2 from Staphylococcus aureus (strain N315).